The chain runs to 47 residues: Cytochrome b559 subunit beta (47 aa).

A helical membrane pass occupies residues 23–39 (WLAVHALAIPSVFFLGA). Residue H27 participates in heme binding.

The protein belongs to the PsbE/PsbF family. In terms of assembly, heterodimer of an alpha subunit and a beta subunit. PSII is composed of 1 copy each of membrane proteins PsbA, PsbB, PsbC, PsbD, PsbE, PsbF, PsbH, PsbI, PsbJ, PsbK, PsbL, PsbM, PsbT, PsbX, PsbY, Psb30/Ycf12, peripheral proteins PsbO, CyanoQ (PsbQ), PsbU, PsbV and a large number of cofactors. It forms dimeric complexes. It depends on heme b as a cofactor.

The protein localises to the cellular thylakoid membrane. Functionally, this b-type cytochrome is tightly associated with the reaction center of photosystem II (PSII). PSII is a light-driven water:plastoquinone oxidoreductase that uses light energy to abstract electrons from H(2)O, generating O(2) and a proton gradient subsequently used for ATP formation. It consists of a core antenna complex that captures photons, and an electron transfer chain that converts photonic excitation into a charge separation. The chain is Cytochrome b559 subunit beta from Prochlorococcus marinus subsp. pastoris (strain CCMP1986 / NIES-2087 / MED4).